We begin with the raw amino-acid sequence, 1168 residues long: Carbamoyl phosphate synthase arginine-specific large chain, mitochondrial (1168 aa).

The transit peptide at 1-51 (MLSTVHKAGRAPALLRHGRRVPVQASQLRALTSGAQNTSIFQTQANAAQRL) directs the protein to the mitochondrion. Positions 86–483 (RDHVDVKKVL…SFQKAIRQVD (398 aa)) are carboxyphosphate synthetic domain. ATP contacts are provided by residues R213, 243–298 (ANKI…WKEV), R253, G259, G260, K290, L292, E297, G323, I324, H325, Q366, and E380. In terms of domain architecture, ATP-grasp 1 spans 217 to 409 (AKALEEINIP…LAYTAAKIGL (193 aa)). 3 residues coordinate Mg(2+): Q366, E380, and N382. Positions 366, 380, and 382 each coordinate Mn(2+). An oligomerization domain region spans residues 484-628 (PRFVGFQGDK…YTTYNASSHD (145 aa)). Residues 629 to 1017 (VTFEDKGTVI…AYWASLQSAM (389 aa)) are carbamoyl phosphate synthetic domain. In terms of domain architecture, ATP-grasp 2 spans 754-951 (SEILDSIGVD…FIDAATKALV (198 aa)). ATP-binding positions include 780–837 (AEEV…AQEI), R790, K829, I831, E836, G861, V862, H863, S864, Q904, and E922. Residues Q904, E922, and N924 each coordinate Mg(2+). Residues Q904, E922, and N924 each contribute to the Mn(2+) site. Residues 1018-1152 (NFRVPEPGEG…AEKLPRPEGI (135 aa)) form an allosteric domain region. An MGS-like domain is found at 1019–1168 (FRVPEPGEGL…WSEFIGGKPL (150 aa)).

It belongs to the CarB family. Heterodimer composed of 2 chains; the small (or glutamine) chain promotes the hydrolysis of glutamine to ammonia, which is used by the large (or ammonia) chain to synthesize carbamoyl phosphate. The cofactor is Mg(2+). It depends on Mn(2+) as a cofactor.

The protein resides in the mitochondrion matrix. It catalyses the reaction hydrogencarbonate + L-glutamine + 2 ATP + H2O = carbamoyl phosphate + L-glutamate + 2 ADP + phosphate + 2 H(+). It carries out the reaction hydrogencarbonate + NH4(+) + 2 ATP = carbamoyl phosphate + 2 ADP + phosphate + 2 H(+). The protein operates within amino-acid biosynthesis; L-arginine biosynthesis; carbamoyl phosphate from bicarbonate: step 1/1. Functionally, large subunit of the arginine-specific carbamoyl phosphate synthase (CPSase). CPSase catalyzes the formation of carbamoyl phosphate from the ammonia moiety of glutamine, hydrogencarbonate, and phosphate donated by ATP, the first step of the arginine biosynthetic pathway. The large subunit (synthetase) binds the substrates ammonia (free or transferred from glutamine from the small subunit), hydrogencarbonate and ATP and carries out an ATP-coupled ligase reaction, activating hydrogencarbonate by forming carboxy phosphate which reacts with ammonia to form carbamoyl phosphate. This is Carbamoyl phosphate synthase arginine-specific large chain, mitochondrial (arg-3) from Neurospora crassa (strain ATCC 24698 / 74-OR23-1A / CBS 708.71 / DSM 1257 / FGSC 987).